The following is a 212-amino-acid chain: MNIFRFLGDISHLSAIIILLLKIWKSRSCAGISGKSQLLFAIVFTTRYLDLFTNFISFYNTSMKVVYVASSYATVWMIYSKFKATYDGNHDTFRVEFLIVPTAILSFLVNHDFTPLEILWTFSIYLESVAILPQLFMVSKTGEAETITSHYLFALGIYRTLYLFNWIWRYQFEEFFDLIAIVAGLVQTVLYCDFFYLYITKVLKGKKLSLPA.

At 1-4 (MNIF) the chain is on the lumenal side. Residues 5 to 24 (RFLGDISHLSAIIILLLKIW) traverse the membrane as a helical segment. The Cytoplasmic portion of the chain corresponds to 25–32 (KSRSCAGI). The chain crosses the membrane as a helical span at residues 33 to 52 (SGKSQLLFAIVFTTRYLDLF). Residues 47–48 (RY) form an interaction with the K-D-E-L motif on target proteins region. Topologically, residues 53 to 58 (TNFISF) are lumenal. Residues 59–79 (YNTSMKVVYVASSYATVWMIY) form a helical membrane-spanning segment. At 80–92 (SKFKATYDGNHDT) the chain is on the cytoplasmic side. A helical transmembrane segment spans residues 93 to 110 (FRVEFLIVPTAILSFLVN). Residues 111–116 (HDFTPL) are Lumenal-facing. The helical transmembrane segment at 117–135 (EILWTFSIYLESVAILPQL) threads the bilayer. Residues 136-149 (FMVSKTGEAETITS) are Cytoplasmic-facing. The helical transmembrane segment at 150-168 (HYLFALGIYRTLYLFNWIW) threads the bilayer. Positions 159–169 (RTLYLFNWIWR) are interaction with the K-D-E-L motif on target proteins. Over 169 to 178 (RYQFEEFFDL) the chain is Lumenal. Residues 179–199 (IAIVAGLVQTVLYCDFFYLYI) form a helical membrane-spanning segment. The Cytoplasmic segment spans residues 200–212 (TKVLKGKKLSLPA). The interval 204 to 207 (KGKK) is important for recycling of cargo proteins with the sequence motif K-D-E-L from the Golgi to the endoplasmic reticulum.

It belongs to the ERD2 family.

The protein resides in the golgi apparatus membrane. It localises to the cytoplasmic vesicle. The protein localises to the COPI-coated vesicle membrane. Its subcellular location is the endoplasmic reticulum membrane. It is found in the endoplasmic reticulum-Golgi intermediate compartment membrane. Functionally, receptor for the C-terminal sequence motif K-D-E-L that is present on endoplasmic reticulum resident proteins and that mediates their recycling from the Golgi back to the endoplasmic reticulum. The polypeptide is ER lumen protein-retaining receptor 1-B (kdelr1-b) (Xenopus laevis (African clawed frog)).